The sequence spans 1070 residues: DNA-directed RNA polymerase subunit beta (1070 aa).

It belongs to the RNA polymerase beta chain family. In terms of assembly, in plastids the minimal PEP RNA polymerase catalytic core is composed of four subunits: alpha, beta, beta', and beta''. When a (nuclear-encoded) sigma factor is associated with the core the holoenzyme is formed, which can initiate transcription.

Its subcellular location is the plastid. It is found in the chloroplast. It carries out the reaction RNA(n) + a ribonucleoside 5'-triphosphate = RNA(n+1) + diphosphate. DNA-dependent RNA polymerase catalyzes the transcription of DNA into RNA using the four ribonucleoside triphosphates as substrates. The polypeptide is DNA-directed RNA polymerase subunit beta (Nicotiana tomentosiformis (Tobacco)).